The chain runs to 1102 residues: DNA-directed RNA polymerase subunit beta (1102 aa).

The interval 1076–1102 (IDSQRRAPNRPTYESLHTEEDLEEEEV) is disordered.

It belongs to the RNA polymerase beta chain family. In cyanobacteria the RNAP catalytic core is composed of 2 alpha, 1 beta, 1 beta', 1 gamma and 1 omega subunit. When a sigma factor is associated with the core the holoenzyme is formed, which can initiate transcription.

It catalyses the reaction RNA(n) + a ribonucleoside 5'-triphosphate = RNA(n+1) + diphosphate. Functionally, DNA-dependent RNA polymerase catalyzes the transcription of DNA into RNA using the four ribonucleoside triphosphates as substrates. The polypeptide is DNA-directed RNA polymerase subunit beta (Synechocystis sp. (strain ATCC 27184 / PCC 6803 / Kazusa)).